A 346-amino-acid chain; its full sequence is Putative aminopeptidase YhfE (346 aa).

A divalent metal cation is bound by residues histidine 68 and aspartate 185. The Proton acceptor role is filled by glutamate 219. A divalent metal cation is bound by residues glutamate 220, aspartate 240, and histidine 320.

The protein belongs to the peptidase M42 family. Requires a divalent metal cation as cofactor.

This chain is Putative aminopeptidase YhfE (yhfE), found in Bacillus subtilis (strain 168).